A 472-amino-acid chain; its full sequence is Sporozoite surface protein P36p (472 aa).

The N-terminal stretch at 1 to 23 (MMKRRRIFMYYCFCFLLKYVAFS) is a signal peptide. N24, N29, N93, N112, and N185 each carry an N-linked (GlcNAc...) asparagine glycan. 2 6-Cys domains span residues 24–157 (NVTN…FKKM) and 160–299 (KIKG…TSKN). Intrachain disulfides connect C64–C138, C81–C136, C164–C188, C202–C281, and C222–C279. 6 N-linked (GlcNAc...) asparagine glycosylation sites follow: N295, N306, N383, N396, N400, and N416. The disordered stretch occupies residues 359–385 (KMDPSDEDESNENAHNGNRANKDANYS). A lipid anchor (GPI-anchor amidated serine) is attached at S449. Positions 450 to 472 (SSYYEVFNYFSIAFILIIHMLLW) are cleaved as a propeptide — removed in mature form.

Its subcellular location is the cell surface. It is found in the cell membrane. Involved in sporozoite infection of hepatocytes and replication therein. The protein is Sporozoite surface protein P36p (P52) of Plasmodium berghei (strain Anka).